The following is a 95-amino-acid chain: MSVDATTVRRIAHLARIAVTDAEVPHLQGELNAMLAFVEQLGEVDVDGVEPMTSVTPMQMKKRVDAVNDGEIADQVVANAPATEDHFFLVPKVVE.

Belongs to the GatC family. In terms of assembly, heterotrimer of A, B and C subunits.

It catalyses the reaction L-glutamyl-tRNA(Gln) + L-glutamine + ATP + H2O = L-glutaminyl-tRNA(Gln) + L-glutamate + ADP + phosphate + H(+). The catalysed reaction is L-aspartyl-tRNA(Asn) + L-glutamine + ATP + H2O = L-asparaginyl-tRNA(Asn) + L-glutamate + ADP + phosphate + 2 H(+). Allows the formation of correctly charged Asn-tRNA(Asn) or Gln-tRNA(Gln) through the transamidation of misacylated Asp-tRNA(Asn) or Glu-tRNA(Gln) in organisms which lack either or both of asparaginyl-tRNA or glutaminyl-tRNA synthetases. The reaction takes place in the presence of glutamine and ATP through an activated phospho-Asp-tRNA(Asn) or phospho-Glu-tRNA(Gln). The sequence is that of Aspartyl/glutamyl-tRNA(Asn/Gln) amidotransferase subunit C from Rhodopseudomonas palustris (strain BisB18).